A 108-amino-acid chain; its full sequence is Small ribosomal subunit protein bS18c (108 aa).

2 stretches are compositionally biased toward basic residues: residues 1–19 (MDKS…RRRL) and 97–108 (RARKKKIGLLLN). Disordered regions lie at residues 1–23 (MDKS…PPIG) and 83–108 (QFER…LLLN).

Belongs to the bacterial ribosomal protein bS18 family. As to quaternary structure, part of the 30S ribosomal subunit.

It localises to the plastid. It is found in the chloroplast. This chain is Small ribosomal subunit protein bS18c, found in Illicium oligandrum (Star anise).